We begin with the raw amino-acid sequence, 295 residues long: Small ribosomal subunit protein uS2 (295 aa).

The residue at position 2 (Ser-2) is an N-acetylserine. The residue at position 43 (Ser-43) is a Phosphoserine. Lys-52 is modified (N6-acetyllysine). The segment at 54 to 113 (TWEKLLLAARAIVAIENPADVSVISSRNTGQRAVLKFAAATGATPIAGRFTPGTFTNQIQ) is interaction with PPP1R16B. Lys-89 carries the post-translational modification N6-acetyllysine; alternate. Residue Lys-89 forms a Glycyl lysine isopeptide (Lys-Gly) (interchain with G-Cter in SUMO2); alternate linkage. Thr-97 carries the phosphothreonine modification. 2 laminin-binding regions span residues 161–180 (IPCN…MLAR) and 205–229 (RDPE…EFQG). [DE]-W-[ST] repeat units lie at residues 230–232 (EWT), 247–249 (DWS), 266–268 (DWS), 275–277 (DWS), and 293–295 (EWS). The segment at 242–295 (QPEVADWSEGVQVPSVPIQQFPTEDWSAQPSTEDWSAAPTAQATEWVGTTTEWS) is laminin-binding. The interval 266–295 (DWSAQPSTEDWSAAPTAQATEWVGTTTEWS) is disordered.

This sequence belongs to the universal ribosomal protein uS2 family. Monomer (37LRP) and homodimer (67LR). Component of the small ribosomal subunit. Mature ribosomes consist of a small (40S) and a large (60S) subunit. The 40S subunit contains about 33 different proteins and 1 molecule of RNA (18S). The 60S subunit contains about 49 different proteins and 3 molecules of RNA (28S, 5.8S and 5S). Interacts with RPS21. Interacts with several laminins including at least LAMB1. Interacts with MDK. The mature dimeric form interacts with PPP1R16B (via its fourth ankyrin repeat). Interacts with PPP1CA only in the presence of PPP1R16B. Post-translationally, acylated. Acylation may be a prerequisite for conversion of the monomeric 37 kDa laminin receptor precursor (37LRP) to the mature dimeric 67 kDa laminin receptor (67LR), and may provide a mechanism for membrane association. In terms of processing, cleaved by stromelysin-3 (ST3) at the cell surface. Cleavage by stromelysin-3 may be a mechanism to alter cell-extracellular matrix interactions.

The protein localises to the cell membrane. It localises to the cytoplasm. Its subcellular location is the nucleus. Required for the assembly and/or stability of the 40S ribosomal subunit. Required for the processing of the 20S rRNA-precursor to mature 18S rRNA in a late step of the maturation of 40S ribosomal subunits. Also functions as a cell surface receptor for laminin. Plays a role in cell adhesion to the basement membrane and in the consequent activation of signaling transduction pathways. May play a role in cell fate determination and tissue morphogenesis. Also acts as a receptor for several other ligands, including the pathogenic prion protein, viruses, and bacteria. Acts as a PPP1R16B-dependent substrate of PPP1CA. This Bos taurus (Bovine) protein is Small ribosomal subunit protein uS2.